The chain runs to 196 residues: Small ribosomal subunit protein uS4c (196 aa).

The disordered stretch occupies residues 16-36 (GTLPGLTSKRPKSGSDLKTQL). Residues 89 to 150 (MRLDNILFRL…KQRSKALIQN (62 aa)) form the S4 RNA-binding domain.

Belongs to the universal ribosomal protein uS4 family. In terms of assembly, part of the 30S ribosomal subunit. Contacts protein S5. The interaction surface between S4 and S5 is involved in control of translational fidelity.

It is found in the plastid. It localises to the chloroplast. Its function is as follows. One of the primary rRNA binding proteins, it binds directly to 16S rRNA where it nucleates assembly of the body of the 30S subunit. Functionally, with S5 and S12 plays an important role in translational accuracy. The protein is Small ribosomal subunit protein uS4c (rps4) of Rhapis humilis (Slender lady palm).